We begin with the raw amino-acid sequence, 331 residues long: Fructose-1,6-bisphosphatase class 1 (331 aa).

Positions 80, 98, 100, and 101 each coordinate Mg(2+). Substrate is bound by residues 101–104 (DGSS) and asparagine 189. A Mg(2+)-binding site is contributed by glutamate 261.

It belongs to the FBPase class 1 family. In terms of assembly, homotetramer. It depends on Mg(2+) as a cofactor.

Its subcellular location is the cytoplasm. It carries out the reaction beta-D-fructose 1,6-bisphosphate + H2O = beta-D-fructose 6-phosphate + phosphate. It functions in the pathway carbohydrate biosynthesis; gluconeogenesis. The chain is Fructose-1,6-bisphosphatase class 1 from Rhodobacter capsulatus (strain ATCC BAA-309 / NBRC 16581 / SB1003).